A 98-amino-acid polypeptide reads, in one-letter code: uncharacterized protein (98 aa).

Positions Lys-30–Glu-98 constitute an MOSC domain.

This is an uncharacterized protein from Haemophilus influenzae (strain ATCC 51907 / DSM 11121 / KW20 / Rd).